We begin with the raw amino-acid sequence, 387 residues long: Sulfopyruvate decarboxylase (387 aa).

The protein belongs to the TPP enzyme family. Thiamine diphosphate is required as a cofactor.

It carries out the reaction 3-sulfopyruvate + H(+) = sulfoacetaldehyde + CO2. It functions in the pathway cofactor biosynthesis; coenzyme M biosynthesis. Its function is as follows. Involved in the biosynthesis of the coenzyme M (2-mercaptoethanesulfonic acid). Catalyzes the decarboxylation of sulfopyruvate to sulfoacetaldehyde. Is not able to decarboxylate the analogous compounds 2-oxoglutarate or 2-oxosuberate. The protein is Sulfopyruvate decarboxylase of Methanosarcina acetivorans (strain ATCC 35395 / DSM 2834 / JCM 12185 / C2A).